The chain runs to 419 residues: L-rhamnose isomerase (419 aa).

Residues H262, D294, and D296 each contribute to the Mn(2+) site.

The protein belongs to the rhamnose isomerase family. In terms of assembly, homotetramer. Mn(2+) is required as a cofactor.

It is found in the cytoplasm. The enzyme catalyses L-rhamnopyranose = L-rhamnulose. It participates in carbohydrate degradation; L-rhamnose degradation; glycerone phosphate from L-rhamnose: step 1/3. Functionally, catalyzes the interconversion of L-rhamnose and L-rhamnulose. This is L-rhamnose isomerase from Shigella flexneri.